We begin with the raw amino-acid sequence, 435 residues long: uncharacterized protein (435 aa).

Serine 47 carries the post-translational modification Phosphoserine. Disordered stretches follow at residues leucine 174 to aspartate 210 and lysine 290 to lysine 372. A compositionally biased stretch (acidic residues) spans asparagine 195–aspartate 210. Over residues lysine 290–alanine 304 the composition is skewed to basic and acidic residues. Residues serine 308 to threonine 318 show a composition bias toward polar residues. Basic and acidic residues-rich tracts occupy residues glutamate 322 to asparagine 340 and valine 347 to aspartate 361.

The protein localises to the cytoplasm. This is an uncharacterized protein from Saccharomyces cerevisiae (strain ATCC 204508 / S288c) (Baker's yeast).